The chain runs to 172 residues: Ribosome maturation factor RimM (172 aa).

Positions E96–L170 constitute a PRC barrel domain.

Belongs to the RimM family. As to quaternary structure, binds ribosomal protein uS19.

It is found in the cytoplasm. In terms of biological role, an accessory protein needed during the final step in the assembly of 30S ribosomal subunit, possibly for assembly of the head region. Essential for efficient processing of 16S rRNA. May be needed both before and after RbfA during the maturation of 16S rRNA. It has affinity for free ribosomal 30S subunits but not for 70S ribosomes. The polypeptide is Ribosome maturation factor RimM (Listeria monocytogenes serotype 4b (strain CLIP80459)).